The following is a 494-amino-acid chain: Alpha-amylase B (494 aa).

The first 18 residues, 1–18 (MFLAKSIVCLALLAVANA), serve as a signal peptide directing secretion. The residue at position 19 (Gln19) is a Pyrrolidone carboxylic acid. Cysteines 46 and 102 form a disulfide. Residues Asn116, Arg165, and Asp174 each coordinate Ca(2+). A disulfide bridge connects residues Cys153 and Cys167. Arg202 lines the chloride pocket. The active-site Nucleophile is the Asp204. A Ca(2+)-binding site is contributed by His208. Glu241 (proton donor) is an active-site residue. Residues Asn304 and Arg343 each contribute to the chloride site. 2 disulfide bridges follow: Cys376–Cys382 and Cys448–Cys460.

The protein belongs to the glycosyl hydrolase 13 family. As to quaternary structure, monomer. Ca(2+) is required as a cofactor. Requires chloride as cofactor.

The catalysed reaction is Endohydrolysis of (1-&gt;4)-alpha-D-glucosidic linkages in polysaccharides containing three or more (1-&gt;4)-alpha-linked D-glucose units.. The chain is Alpha-amylase B (Amy-d) from Drosophila yakuba (Fruit fly).